Reading from the N-terminus, the 323-residue chain is tRNA U34 carboxymethyltransferase (323 aa).

Carboxy-S-adenosyl-L-methionine contacts are provided by residues Lys93, Trp107, Lys112, Gly132, 154–156 (DPS), 182–183 (VE), Met197, Tyr201, and Arg316.

Belongs to the class I-like SAM-binding methyltransferase superfamily. CmoB family. Homotetramer.

The enzyme catalyses carboxy-S-adenosyl-L-methionine + 5-hydroxyuridine(34) in tRNA = 5-carboxymethoxyuridine(34) in tRNA + S-adenosyl-L-homocysteine + H(+). Its function is as follows. Catalyzes carboxymethyl transfer from carboxy-S-adenosyl-L-methionine (Cx-SAM) to 5-hydroxyuridine (ho5U) to form 5-carboxymethoxyuridine (cmo5U) at position 34 in tRNAs. This is tRNA U34 carboxymethyltransferase from Pseudoalteromonas atlantica (strain T6c / ATCC BAA-1087).